The sequence spans 190 residues: dCTP deaminase (190 aa).

113–118 (KSTYAR) contacts dCTP. The Proton donor/acceptor role is filled by glutamate 139. Residues glutamine 158, tyrosine 172, lysine 181, and glutamine 182 each coordinate dCTP.

It belongs to the dCTP deaminase family. Homotrimer.

It catalyses the reaction dCTP + H2O + H(+) = dUTP + NH4(+). It functions in the pathway pyrimidine metabolism; dUMP biosynthesis; dUMP from dCTP (dUTP route): step 1/2. Functionally, catalyzes the deamination of dCTP to dUTP. The chain is dCTP deaminase from Chlamydia caviae (strain ATCC VR-813 / DSM 19441 / 03DC25 / GPIC) (Chlamydophila caviae).